Reading from the N-terminus, the 927-residue chain is Isoleucine--tRNA ligase (927 aa).

Residues 57–67 carry the 'HIGH' region motif; sequence PYANGHIHIGH. E561 serves as a coordination point for L-isoleucyl-5'-AMP. The 'KMSKS' region signature appears at 602 to 606; it reads KMSKS. An ATP-binding site is contributed by K605. The Zn(2+) site is built by C897, C900, C917, and C920.

The protein belongs to the class-I aminoacyl-tRNA synthetase family. IleS type 1 subfamily. As to quaternary structure, monomer. Zn(2+) is required as a cofactor.

The protein localises to the cytoplasm. The enzyme catalyses tRNA(Ile) + L-isoleucine + ATP = L-isoleucyl-tRNA(Ile) + AMP + diphosphate. Functionally, catalyzes the attachment of isoleucine to tRNA(Ile). As IleRS can inadvertently accommodate and process structurally similar amino acids such as valine, to avoid such errors it has two additional distinct tRNA(Ile)-dependent editing activities. One activity is designated as 'pretransfer' editing and involves the hydrolysis of activated Val-AMP. The other activity is designated 'posttransfer' editing and involves deacylation of mischarged Val-tRNA(Ile). This chain is Isoleucine--tRNA ligase, found in Syntrophotalea carbinolica (strain DSM 2380 / NBRC 103641 / GraBd1) (Pelobacter carbinolicus).